Here is a 248-residue protein sequence, read N- to C-terminus: Opiorphin prepropeptide (248 aa).

A signal peptide spans 1 to 21; it reads MKLTFFLGLLALISCFTPSES. Gln-22 carries the pyrrolidone carboxylic acid modification. The segment at 150 to 198 is disordered; the sequence is DTTITTNPPTTATATTSTSTKPTMTISSSTVPISSTPEPATSISAATPA. N-linked (GlcNAc...) asparagine glycosylation occurs at Asn-218.

The protein belongs to the PROL1/PROL3 family. In terms of tissue distribution, abundantly expressed in lacrimal gland where it found in the secretory endpieces. Also expressed at modest levels in the submandibular gland.

Its subcellular location is the secreted. Its function is as follows. Opiorphin is an endogenous inhibitor of neprilysin and aminopeptidase N. Inhibits the breakdown of substance P, Mca-BK2 and Met-enkephalin by neprilysin in vitro with IC(50) values of 29 uM, 33 uM and 33 uM respectively. Inhibits the breakdown of Ala-pNA by aminopeptidase N in vitro with an IC(50) of 65 uM. Has a potent analgesic effect when administered to rats by intravenous injection. The sequence is that of Opiorphin prepropeptide from Homo sapiens (Human).